The sequence spans 273 residues: Transposable element Tcb1 transposase (273 aa).

The protein belongs to the transposase 5 family.

The protein resides in the nucleus. Functionally, probably essential for transposable element Tcb1 transposition. The insertion of Tcb1 is the main cause of spontaneous mutations. The sequence is that of Transposable element Tcb1 transposase from Caenorhabditis briggsae.